A 433-amino-acid chain; its full sequence is Trigger factor (433 aa).

Residues 161–246 (NDRVIIDFVG…LNKVENMILP (86 aa)) form the PPIase FKBP-type domain.

Belongs to the FKBP-type PPIase family. Tig subfamily.

It localises to the cytoplasm. It carries out the reaction [protein]-peptidylproline (omega=180) = [protein]-peptidylproline (omega=0). Functionally, involved in protein export. Acts as a chaperone by maintaining the newly synthesized protein in an open conformation. Functions as a peptidyl-prolyl cis-trans isomerase. This is Trigger factor from Haemophilus ducreyi (strain 35000HP / ATCC 700724).